Here is a 212-residue protein sequence, read N- to C-terminus: ATP-dependent dethiobiotin synthetase BioD (212 aa).

13 to 18 contacts ATP; it reads GIGKTV. Thr-17 is a binding site for Mg(2+). Residue Lys-33 is part of the active site. Position 100 (Glu-100) interacts with Mg(2+). Residues 100–103 and 184–186 each bind ATP; these read EGAG and PHV.

The protein belongs to the dethiobiotin synthetase family. Homodimer. Requires Mg(2+) as cofactor.

The protein localises to the cytoplasm. It carries out the reaction (7R,8S)-7,8-diammoniononanoate + CO2 + ATP = (4R,5S)-dethiobiotin + ADP + phosphate + 3 H(+). It functions in the pathway cofactor biosynthesis; biotin biosynthesis; biotin from 7,8-diaminononanoate: step 1/2. In terms of biological role, catalyzes a mechanistically unusual reaction, the ATP-dependent insertion of CO2 between the N7 and N8 nitrogen atoms of 7,8-diaminopelargonic acid (DAPA, also called 7,8-diammoniononanoate) to form a ureido ring. The protein is ATP-dependent dethiobiotin synthetase BioD of Nitrobacter hamburgensis (strain DSM 10229 / NCIMB 13809 / X14).